The sequence spans 252 residues: Proteasome subunit alpha 1 (252 aa).

At M1 the chain carries N-acetylmethionine; alternate.

This sequence belongs to the peptidase T1A family. In terms of assembly, the 20S proteasome core is composed of 14 alpha and 14 beta subunits that assemble into four stacked heptameric rings, resulting in a barrel-shaped structure. The two inner rings, each composed of seven catalytic beta subunits, are sandwiched by two outer rings, each composed of seven alpha subunits. H.volcanii produces at least 2 types of 20S proteasomes: an alpha1-beta proteasome and a proteasome containing all three subunits (alpha1, alpha2, and beta) that appears to be asymmetrical with homo-oligomeric alpha1 and alpha2 rings positioned on separate ends. The catalytic chamber with the active sites is on the inside of the barrel. Has probably a gated structure, the ends of the cylinder being occluded by the N-termini of the alpha-subunits. Is likely capped at one or both ends by the proteasome regulatory ATPase, PAN. In terms of processing, acetylated. The acetylated form at Met-1 was shown to be in 100-fold excess of the unacetylated form with the initiator methionine removed in whole cells and purified 20S proteasomes.

Its subcellular location is the cytoplasm. The formation of the proteasomal ATPase PAN-20S proteasome complex, via the docking of the C-termini of PAN into the intersubunit pockets in the alpha-rings, triggers opening of the gate for substrate entry. Interconversion between the open-gate and close-gate conformations leads to a dynamic regulation of the 20S proteasome proteolysis activity. In vitro, the chymotrypsin-like activity of the alpha1-beta proteasome is potently inhibited by carbobenzoxyl-leucinyl-leucinyl-leucinal-H (MG132) and significantly by N-acetyl-leucinyl-leucinyl-norleucinal-H (calpain inhibitor I). In terms of biological role, component of the proteasome core, a large protease complex with broad specificity involved in protein degradation. The H.volcanii alpha1-beta proteasome is able to cleave oligopeptides after Phe, Tyr and Trp, poorly after Glu but not after Arg. Thus, displays chymotrypsin-like activity, low caspase-like activity but no trypsin-like activity. In Haloferax volcanii (strain ATCC 29605 / DSM 3757 / JCM 8879 / NBRC 14742 / NCIMB 2012 / VKM B-1768 / DS2) (Halobacterium volcanii), this protein is Proteasome subunit alpha 1.